Consider the following 143-residue polypeptide: Nucleoside diphosphate kinase (143 aa).

Residues Lys11, Phe59, Arg87, Thr93, Arg104, and Asn114 each contribute to the ATP site. His117 acts as the Pros-phosphohistidine intermediate in catalysis.

It belongs to the NDK family. Homotetramer. The cofactor is Mg(2+).

It localises to the cytoplasm. The enzyme catalyses a 2'-deoxyribonucleoside 5'-diphosphate + ATP = a 2'-deoxyribonucleoside 5'-triphosphate + ADP. It catalyses the reaction a ribonucleoside 5'-diphosphate + ATP = a ribonucleoside 5'-triphosphate + ADP. In terms of biological role, major role in the synthesis of nucleoside triphosphates other than ATP. The ATP gamma phosphate is transferred to the NDP beta phosphate via a ping-pong mechanism, using a phosphorylated active-site intermediate. The protein is Nucleoside diphosphate kinase of Erwinia tasmaniensis (strain DSM 17950 / CFBP 7177 / CIP 109463 / NCPPB 4357 / Et1/99).